The primary structure comprises 551 residues: Arginine--tRNA ligase (551 aa).

Positions 125–135 (ANPTGPLHIGH) match the 'HIGH' region motif.

This sequence belongs to the class-I aminoacyl-tRNA synthetase family. As to quaternary structure, monomer.

Its subcellular location is the cytoplasm. The catalysed reaction is tRNA(Arg) + L-arginine + ATP = L-arginyl-tRNA(Arg) + AMP + diphosphate. In Oleidesulfovibrio alaskensis (strain ATCC BAA-1058 / DSM 17464 / G20) (Desulfovibrio alaskensis), this protein is Arginine--tRNA ligase.